Reading from the N-terminus, the 421-residue chain is ARAAARHYADQRIKVAKPVVEMDGDEMTRIIWQFIKEKLILPHVDVQLKYFDLGLPNRDQTNDQVTIDSALATQKYSVAVKCATITPDEARVEEFKLKKMWKSPNGTIRNILGGTVFREPIICKNIPRLVPGWTKPITIGRHAHGDQYKATDFVVDRAGTFKIVFTPKDGSSAKQWEVYNFPAGGVGMGMYNTDESISGFAHSCFQYAIQKKWPLYMSTKNTILKAYDGRFKDIFQEIFEKHYKTDFDKYKIWYEHRLIDDMVAQVLKSSGGFVWACKNYDGDVQSDILAQGFGSLGLMTSVLVCPDGKTIEAEAAHGTVTRHYREHQKGRPTSTNPIASIFAWTRGLEHRGKLDGNQDLIRFAQTLEKVCVETVESGAMTKDLAGCIHGLSNVKLNEHFLNTSDFLDTIKSNLDRALGRQ.

The N-terminal 8 residues, 1 to 8, are a transit peptide targeting the mitochondrion; sequence ARAAARHY. Residues Lys14, Lys17, Lys36, and Lys38 each carry the N6-acetyllysine modification. N6-acetyllysine; alternate occurs at positions 49 and 75. Lys49 and Lys75 each carry N6-succinyllysine; alternate. NADP(+) contacts are provided by residues 84–86 and Arg91; that span reads TIT. A D-threo-isocitrate-binding site is contributed by Thr86. D-threo-isocitrate is bound by residues 103-109 and Arg118; that span reads SPNGTIR. Lys124 carries the post-translational modification N6-acetyllysine. Residue Lys135 is modified to N6-acetyllysine; alternate. Position 135 is an N6-succinyllysine; alternate (Lys135). Arg141 provides a ligand contact to D-threo-isocitrate. N6-acetyllysine; alternate is present on residues Lys149 and Lys162. Lys149 and Lys162 each carry N6-succinyllysine; alternate. An N6-acetyllysine modification is found at Lys168. At Lys225 the chain carries N6-acetyllysine; alternate. The residue at position 225 (Lys225) is an N6-succinyllysine; alternate. An N6-acetyllysine mark is found at Lys232, Lys241, Lys244, and Lys249. Lys251 carries the N6-acetyllysine; alternate modification. Position 251 is an N6-succinyllysine; alternate (Lys251). Position 260 (Asp260) interacts with Mn(2+). Lys268 lines the NADP(+) pocket. Asp283 serves as a coordination point for Mn(2+). Residues 318-323 and Asn336 each bind NADP(+); that span reads GTVTRH. N6-acetyllysine; alternate is present on Lys353. An N6-succinyllysine; alternate modification is found at Lys353. N6-acetyllysine is present on residues Lys369, Lys382, and Lys411.

The protein belongs to the isocitrate and isopropylmalate dehydrogenases family. Homodimer. Requires Mg(2+) as cofactor. The cofactor is Mn(2+). Acetylation at Lys-382 dramatically reduces catalytic activity. Deacetylated by SIRT3.

It is found in the mitochondrion. The catalysed reaction is D-threo-isocitrate + NADP(+) = 2-oxoglutarate + CO2 + NADPH. Functionally, plays a role in intermediary metabolism and energy production. It may tightly associate or interact with the pyruvate dehydrogenase complex. This chain is Isocitrate dehydrogenase [NADP], mitochondrial (IDH2), found in Sus scrofa (Pig).